We begin with the raw amino-acid sequence, 1013 residues long: Zinc finger and BTB domain-containing protein 4 (1013 aa).

One can recognise a BTB domain in the interval 30–152 (CDVTLIAGDT…IYSARLALPG (123 aa)). Lysine 40 is covalently cross-linked (Glycyl lysine isopeptide (Lys-Gly) (interchain with G-Cter in SUMO2)). Over residues 67 to 110 (LPPATGGAAPNPATTTAASSSSSSSSSSSSSSSSASSSSSSSSS) the composition is skewed to low complexity. Disordered regions lie at residues 67 to 124 (LPPA…SPPR) and 183 to 221 (DAWV…AEAQ). Residues 111-121 (SPPPASPPASS) show a composition bias toward pro residues. The interval 186–348 (VPPTPAPMAT…CRYCEKVFAL (163 aa)) is interaction with CBFA2T3. The C2H2-type 1; atypical zinc-finger motif lies at 234-256 (LPCPQCGKSFIHPKRLQTHEAQC). Residues 257–281 (RRGASTRGSTGLGAGGAGPGGPAGV) are disordered. Positions 266–279 (TGLGAGGAGPGGPA) are enriched in gly residues. 3 consecutive C2H2-type zinc fingers follow at residues 309–331 (YVCA…SNVH), 337–359 (YPCR…EVWH), and 365–388 (YQCI…RAFH). Residue serine 391 is modified to Phosphoserine. Disordered stretches follow at residues 428–765 (KTYS…STRF), 783–852 (HGQR…DPII), 883–904 (GREP…AGEG), and 972–1013 (VNPQ…GDVG). Over residues 453 to 470 (ASPPPGPPPAPEPGPPPS) the composition is skewed to pro residues. Low complexity-rich tracts occupy residues 496 to 506 (TASTGGSQAAS) and 531 to 554 (ATPT…ATTT). A Glycyl lysine isopeptide (Lys-Gly) (interchain with G-Cter in SUMO2) cross-link involves residue lysine 573. Residues 576–590 (GGIGGGGGPPTGAGR) are compositionally biased toward gly residues. Positions 608–625 (IGEEAIVKRRISETDLRP) are enriched in basic and acidic residues. Residue lysine 615 forms a Glycyl lysine isopeptide (Lys-Gly) (interchain with G-Cter in SUMO2) linkage. Residues 627-663 (ELSGEEMEESEEDEEEEDEEEEEEDEEESKAGGEDQL) are a coiled coil. A compositionally biased stretch (acidic residues) spans 629–654 (SGEEMEESEEDEEEEDEEEEEEDEEE). A compositionally biased stretch (gly residues) spans 678 to 689 (AAGGASVGGSGL). C2H2-type zinc fingers lie at residues 726–748 (HRCG…QEAH) and 765–787 (FTCP…GQRH). Threonine 795 and threonine 797 each carry phosphothreonine; by HIPK2. The segment covering 836–846 (TAAEEASETAS) has biased composition (low complexity). Over residues 883-902 (GREPGGGRGKSGSEGPVGAG) the composition is skewed to gly residues. A compositionally biased stretch (pro residues) spans 976-995 (AAPPAPPTPPPPTLPPPIPP). At threonine 983 the chain carries Phosphothreonine; by HIPK2. Residues 997-1013 (GEGERAGVERTQKGDVG) show a composition bias toward basic and acidic residues.

Interacts with HIPK2. Interacts with CBFA2T3. Interacts with ZBTB38. Post-translationally, phosphorylated by HIPK2. This phosphorylation reduces stability and triggers ZBTB4 protein degradation in response to DNA damage.

It is found in the nucleus. The protein resides in the chromosome. In terms of biological role, transcriptional repressor with bimodal DNA-binding specificity. Represses transcription in a methyl-CpG-dependent manner. Binds with a higher affinity to methylated CpG dinucleotides in the consensus sequence 5'-CGCG-3' but can also bind to the non-methylated consensus sequence 5'-CTGCNA-3' also known as the consensus kaiso binding site (KBS). Can also bind specifically to a single methyl-CpG pair and can bind hemimethylated DNA but with a lower affinity compared to methylated DNA. Plays a role in postnatal myogenesis, may be involved in the regulation of satellite cells self-renewal. This is Zinc finger and BTB domain-containing protein 4 (ZBTB4) from Homo sapiens (Human).